A 318-amino-acid chain; its full sequence is Transaldolase (318 aa).

The active-site Schiff-base intermediate with substrate is lysine 132.

Belongs to the transaldolase family. Type 1 subfamily. In terms of assembly, homodimer.

The protein localises to the cytoplasm. The catalysed reaction is D-sedoheptulose 7-phosphate + D-glyceraldehyde 3-phosphate = D-erythrose 4-phosphate + beta-D-fructose 6-phosphate. It functions in the pathway carbohydrate degradation; pentose phosphate pathway; D-glyceraldehyde 3-phosphate and beta-D-fructose 6-phosphate from D-ribose 5-phosphate and D-xylulose 5-phosphate (non-oxidative stage): step 2/3. Transaldolase is important for the balance of metabolites in the pentose-phosphate pathway. This chain is Transaldolase, found in Shewanella baltica (strain OS155 / ATCC BAA-1091).